The sequence spans 416 residues: Bifunctional protein GlmU (416 aa).

The pyrophosphorylase stretch occupies residues 1-229; sequence MTNYAIILAA…FNESLGVNDR (229 aa). Residues 8–11, Lys22, Gln72, and 77–78 each bind UDP-N-acetyl-alpha-D-glucosamine; these read LAAG and GT. Asp102 contributes to the Mg(2+) binding site. 4 residues coordinate UDP-N-acetyl-alpha-D-glucosamine: Gly139, Glu154, Asn169, and Asn227. Asn227 serves as a coordination point for Mg(2+). The interval 230–250 is linker; that stretch reads VALATAETVMRQRITQKHMVN. Residues 251 to 416 are N-acetyltransferase; sequence GVTFQNPETV…DSHCTFGSWR (166 aa). Positions 332 and 350 each coordinate UDP-N-acetyl-alpha-D-glucosamine. Catalysis depends on His362, which acts as the Proton acceptor. UDP-N-acetyl-alpha-D-glucosamine is bound by residues Tyr365 and Asn376. Residues Ala379 and 385–386 contribute to the acetyl-CoA site; that span reads NY.

This sequence in the N-terminal section; belongs to the N-acetylglucosamine-1-phosphate uridyltransferase family. The protein in the C-terminal section; belongs to the transferase hexapeptide repeat family. As to quaternary structure, homotrimer. Mg(2+) serves as cofactor.

Its subcellular location is the cytoplasm. It catalyses the reaction alpha-D-glucosamine 1-phosphate + acetyl-CoA = N-acetyl-alpha-D-glucosamine 1-phosphate + CoA + H(+). The enzyme catalyses N-acetyl-alpha-D-glucosamine 1-phosphate + UTP + H(+) = UDP-N-acetyl-alpha-D-glucosamine + diphosphate. It participates in nucleotide-sugar biosynthesis; UDP-N-acetyl-alpha-D-glucosamine biosynthesis; N-acetyl-alpha-D-glucosamine 1-phosphate from alpha-D-glucosamine 6-phosphate (route II): step 2/2. Its pathway is nucleotide-sugar biosynthesis; UDP-N-acetyl-alpha-D-glucosamine biosynthesis; UDP-N-acetyl-alpha-D-glucosamine from N-acetyl-alpha-D-glucosamine 1-phosphate: step 1/1. It functions in the pathway bacterial outer membrane biogenesis; LPS lipid A biosynthesis. In terms of biological role, catalyzes the last two sequential reactions in the de novo biosynthetic pathway for UDP-N-acetylglucosamine (UDP-GlcNAc). The C-terminal domain catalyzes the transfer of acetyl group from acetyl coenzyme A to glucosamine-1-phosphate (GlcN-1-P) to produce N-acetylglucosamine-1-phosphate (GlcNAc-1-P), which is converted into UDP-GlcNAc by the transfer of uridine 5-monophosphate (from uridine 5-triphosphate), a reaction catalyzed by the N-terminal domain. This is Bifunctional protein GlmU from Streptococcus pyogenes serotype M12 (strain MGAS2096).